The chain runs to 275 residues: Large ribosomal subunit protein uL2c (275 aa).

The disordered stretch occupies residues 219-254 (TVRGSVMNPCDHPHGGGEGRAPIGRTRPLTPWGKPA).

This sequence belongs to the universal ribosomal protein uL2 family. Part of the 50S ribosomal subunit.

The protein localises to the plastid. The protein resides in the chloroplast. This chain is Large ribosomal subunit protein uL2c (rpl2), found in Phaeodactylum tricornutum (strain CCAP 1055/1).